We begin with the raw amino-acid sequence, 372 residues long: Cytochrome b (372 aa).

A run of 4 helical transmembrane segments spans residues 25 to 45 (FGSMLLTCSALQIMTGFFLSM), 69 to 90 (WMMQNLHAIGASMFFICVYIHV), 105 to 125 (WLSGTTLLIMLMATAFFGYVL), and 170 to 190 (FFALHFILPFGIISLSSLHIM). 2 residues coordinate heme b: His-75 and His-89. Heme b-binding residues include His-174 and His-188. An a ubiquinone-binding site is contributed by His-193. 4 helical membrane-spanning segments follow: residues 218-238 (YKDLFMISSMIMIMLLTISFI), 280-300 (LGGALALAMSIMILLTVPFTH), 312-332 (FMQLMFWTLVATFMIITWTAT), and 339-358 (YTMISQVTSSLYFMFFMSNP).

Belongs to the cytochrome b family. The cytochrome bc1 complex contains 3 respiratory subunits (MT-CYB, CYC1 and UQCRFS1), 2 core proteins (UQCRC1 and UQCRC2) and probably 6 low-molecular weight proteins. Heme b is required as a cofactor.

The protein resides in the mitochondrion inner membrane. Its function is as follows. Component of the ubiquinol-cytochrome c reductase complex (complex III or cytochrome b-c1 complex) that is part of the mitochondrial respiratory chain. The b-c1 complex mediates electron transfer from ubiquinol to cytochrome c. Contributes to the generation of a proton gradient across the mitochondrial membrane that is then used for ATP synthesis. This Acrantophis madagascariensis (Madagascar ground boa) protein is Cytochrome b (MT-CYB).